We begin with the raw amino-acid sequence, 317 residues long: Acetyl-coenzyme A carboxylase carboxyl transferase subunit alpha (317 aa).

The CoA carboxyltransferase C-terminal domain maps to 39-293; it reads RLQKKSNDLT…KAVLEKQLHE (255 aa).

The protein belongs to the AccA family. Acetyl-CoA carboxylase is a heterohexamer composed of biotin carboxyl carrier protein (AccB), biotin carboxylase (AccC) and two subunits each of ACCase subunit alpha (AccA) and ACCase subunit beta (AccD).

The protein localises to the cytoplasm. It carries out the reaction N(6)-carboxybiotinyl-L-lysyl-[protein] + acetyl-CoA = N(6)-biotinyl-L-lysyl-[protein] + malonyl-CoA. It functions in the pathway lipid metabolism; malonyl-CoA biosynthesis; malonyl-CoA from acetyl-CoA: step 1/1. In terms of biological role, component of the acetyl coenzyme A carboxylase (ACC) complex. First, biotin carboxylase catalyzes the carboxylation of biotin on its carrier protein (BCCP) and then the CO(2) group is transferred by the carboxyltransferase to acetyl-CoA to form malonyl-CoA. The chain is Acetyl-coenzyme A carboxylase carboxyl transferase subunit alpha from Neisseria gonorrhoeae (strain NCCP11945).